An 81-amino-acid polypeptide reads, in one-letter code: Antimicrobial peptide D2 (81 aa).

The signal sequence occupies residues 1 to 31 (MAKTVLGIHVTFLTLLFAVILLNDVMYTPVE). Cystine bridges form between C34–C81, C45–C66, C51–C75, and C55–C77.

Its function is as follows. Antimicrobial peptide probably active against fungi like B.sorokiniana, F.oxysporum, F.graminearum, F.avenaceum, B.cinerea, P.beta, P.infestans and P.debaryanum. This is Antimicrobial peptide D2 from Stellaria media (Common chickweed).